Here is a 631-residue protein sequence, read N- to C-terminus: Squalene--hopene cyclase (631 aa).

PFTB repeat units follow at residues 15–56 (LDRA…LDRV), 61–102 (MEKI…KYIG), and 241–282 (EIRA…QHPA). Catalysis depends on D376, which acts as the Proton donor. 4 PFTB repeats span residues 400–441 (MTKG…GEVT), 468–508 (IRRA…KAVG), 516–557 (IQKA…SQTA), and 574–622 (ARRG…LALG).

This sequence belongs to the terpene cyclase/mutase family. In terms of assembly, homodimer.

The protein resides in the cell membrane. It catalyses the reaction squalene = hop-22(29)-ene. It carries out the reaction squalene + H2O = hopan-22-ol. It functions in the pathway secondary metabolite biosynthesis; hopanoid biosynthesis. Its function is as follows. Catalyzes the cyclization of squalene to two pentacyclic triterpenes, hop-22(29)-ene and hopan-22-ol (diplopterol); hopene and hopanol are formed at a constant ratio of 5:1. Is a key enzyme of hopanoid biosynthesis; hopanoids are components of the bacterial cytoplasmic membranes that play a vital role in stabilizing the membranes. This is Squalene--hopene cyclase (shc) from Alicyclobacillus acidocaldarius subsp. acidocaldarius (strain ATCC 27009 / DSM 446 / BCRC 14685 / JCM 5260 / KCTC 1825 / NBRC 15652 / NCIMB 11725 / NRRL B-14509 / 104-IA) (Bacillus acidocaldarius).